A 550-amino-acid chain; its full sequence is Neuronal acetylcholine receptor subunit alpha-9-II (550 aa).

Residues 1 to 20 (MRKMVPVVCFATMLLQVAHS) form the signal peptide. Residues 21–233 (AQGRYAQQLL…YTVLLQRRSS (213 aa)) are Extracellular-facing. Asparagine 52 is a glycosylation site (N-linked (GlcNAc...) asparagine). Cysteine 150 and cysteine 164 are oxidised to a cystine. Asparagine 165 carries N-linked (GlcNAc...) asparagine glycosylation. The cysteines at positions 214 and 215 are disulfide-linked. A run of 3 helical transmembrane segments spans residues 234-254 (FYIF…PLGF), 264-284 (VSLG…VAES), and 298-318 (YIAT…IMNI). Residues 319-528 (HFCGAEAKPV…WKRVAKVMDR (210 aa)) are Cytoplasmic-facing. Positions 357–439 (TSSSSSSSSS…HLSSSKYEGF (83 aa)) are disordered. A compositionally biased stretch (low complexity) spans 358 to 367 (SSSSSSSSSS). A compositionally biased stretch (basic residues) spans 413–422 (RHPKPRHQHH). Residues 529–549 (FFMWIFFIMVFLMSILIIGKA) traverse the membrane as a helical segment.

It belongs to the ligand-gated ion channel (TC 1.A.9) family. Acetylcholine receptor (TC 1.A.9.1) subfamily. As to expression, expressed in the brain, liver, olfactory mucosa, pituitary gland and hair cells of the saccule.

The protein localises to the postsynaptic cell membrane. The protein resides in the cell membrane. This Oncorhynchus mykiss (Rainbow trout) protein is Neuronal acetylcholine receptor subunit alpha-9-II.